The chain runs to 507 residues: Probable serine/threonine-protein kinase DDB_G0268078 (507 aa).

The 283-residue stretch at 4-286 (YQFIKQVGDG…PLQALQHRYF (283 aa)) folds into the Protein kinase domain. Residues 10 to 18 (VGDGAYGDV) and Lys33 contribute to the ATP site. Catalysis depends on Asp125, which acts as the Proton acceptor. The segment covering 323–347 (NYSNNNNNNNLNSNSENLNNVNKNN) has biased composition (low complexity). 3 disordered regions span residues 323–364 (NYSN…PKNS), 381–404 (NVNN…KLDS), and 428–507 (QQPP…NSKL). Residues 348 to 361 (QQPHSPQKIQTPKP) show a composition bias toward polar residues. Residues 381–399 (NVNNNNNNYNSNTTSGYYN) are compositionally biased toward low complexity. The span at 429–450 (QPPPQSQPPQSQPPPQSQPPPI) shows a compositional bias: pro residues. Residues 451 to 470 (LTQQQQQQQQQQQQQQQLPS) show a composition bias toward low complexity. 2 stretches are compositionally biased toward polar residues: residues 471–481 (KTTIYHNTNHL) and 491–507 (RGIS…NSKL).

The protein belongs to the protein kinase superfamily. CMGC Ser/Thr protein kinase family. CDC2/CDKX subfamily.

It carries out the reaction L-seryl-[protein] + ATP = O-phospho-L-seryl-[protein] + ADP + H(+). The enzyme catalyses L-threonyl-[protein] + ATP = O-phospho-L-threonyl-[protein] + ADP + H(+). The chain is Probable serine/threonine-protein kinase DDB_G0268078 from Dictyostelium discoideum (Social amoeba).